We begin with the raw amino-acid sequence, 804 residues long: SH3-containing GRB2-like protein 3-interacting protein 1 (804 aa).

Disordered stretches follow at residues 1–90 (MMEG…EESH), 124–181 (LSPS…GPPL), and 199–254 (IWGS…QSAT). Over residues 16–34 (RKKEKDTDSTGSPDRDGIK) the composition is skewed to basic and acidic residues. 8 positions are modified to phosphoserine: Ser54, Ser80, Ser81, Ser83, Ser125, Ser127, Ser132, and Ser145. Thr156 and Thr158 each carry phosphothreonine. Phosphoserine is present on Ser212. Over residues 221 to 236 (TGTPPPLPPKNVPATP) the composition is skewed to pro residues. Phosphothreonine is present on residues Thr223 and Thr235. Residues Ser241, Ser263, Ser276, Ser292, and Ser295 each carry the phosphoserine modification. Positions 289 to 309 (VHFSDTSPEHVTPELTPREKV) are enriched in basic and acidic residues. Residues 289 to 500 (VHFSDTSPEH…LSAATTPTVE (212 aa)) form a disordered region. Thr300 and Thr304 each carry phosphothreonine. Pro residues predominate over residues 322–346 (SPAPGPLGPPGPTGPPGPPGPPRNV). Ser348 is modified (phosphoserine). A compositionally biased stretch (basic and acidic residues) spans 354 to 369 (EVQKKVAEQTFIKDDY). Position 375 is a phosphoserine (Ser375). Thr386 bears the Phosphothreonine mark. The segment covering 413–432 (TSGASSPARPATPLLPCSST) has biased composition (low complexity). Pro residues predominate over residues 433–451 (TPPPPPPRPPSRPKLPPGK). 2 stretches are compositionally biased toward low complexity: residues 458 to 468 (SRPFSPPIHSS) and 475 to 498 (PLAR…TTPT). Ser462 is modified (phosphoserine). Residues 535–803 (TLPVAAAFTE…RFAAGKYLAD (269 aa)) form the MHD domain. Interaction with DPF motifs-containing proteins regions lie at residues 537 to 543 (PVAAAFT), 569 to 571 (SFP), 643 to 646 (TYYN), and 789 to 794 (SLIKKR). Residues 625-804 (MPNLMTHLKK…FAAGKYLADN (180 aa)) form a necessary and sufficient to mediate interaction with CANX region.

In terms of assembly, interacts with proteins essential or regulating the formation of functional clathrin-coated pits. Interacts with CANX. Interacts with AP2A1. Interacts with EPS15. Interacts with SH3GL3. Interacts with AMPH. Interacts with ITSN1 (via SH3 domains). Interacts with and REPS1.

The protein localises to the membrane. It is found in the clathrin-coated pit. Its function is as follows. May function in clathrin-mediated endocytosis. Has both a membrane binding/tubulating activity and the ability to recruit proteins essential to the formation of functional clathrin-coated pits. Has a preference for membranes enriched in phosphatidylserine and phosphoinositides and is required for the endocytosis of the transferrin receptor. May also bind tubulin. May play a role in the regulation of energy homeostasis. The sequence is that of SH3-containing GRB2-like protein 3-interacting protein 1 (SGIP1) from Pongo abelii (Sumatran orangutan).